Consider the following 225-residue polypeptide: 3-dehydroquinate dehydratase (225 aa).

3-dehydroquinate contacts are provided by residues Ser-6, 30–32 (EWR), and Arg-62. His-118 serves as the catalytic Proton donor/acceptor. The Schiff-base intermediate with substrate role is filled by Lys-143. Residues Arg-186, Ser-205, and Gln-209 each contribute to the 3-dehydroquinate site.

Belongs to the type-I 3-dehydroquinase family. Homodimer.

The catalysed reaction is 3-dehydroquinate = 3-dehydroshikimate + H2O. The protein operates within metabolic intermediate biosynthesis; chorismate biosynthesis; chorismate from D-erythrose 4-phosphate and phosphoenolpyruvate: step 3/7. Functionally, involved in the third step of the chorismate pathway, which leads to the biosynthesis of aromatic amino acids. Catalyzes the cis-dehydration of 3-dehydroquinate (DHQ) and introduces the first double bond of the aromatic ring to yield 3-dehydroshikimate. The polypeptide is 3-dehydroquinate dehydratase (Streptococcus pneumoniae (strain Hungary19A-6)).